A 270-amino-acid chain; its full sequence is Type III pantothenate kinase (270 aa).

19 to 26 provides a ligand contact to ATP; the sequence is DIGNTSTT. Residues Y109 and 116–119 contribute to the substrate site; that span reads GADR. Catalysis depends on D118, which acts as the Proton acceptor. D139 contacts K(+). An ATP-binding site is contributed by T142. Position 194 (T194) interacts with substrate.

This sequence belongs to the type III pantothenate kinase family. Homodimer. NH4(+) serves as cofactor. K(+) is required as a cofactor.

The protein localises to the cytoplasm. It carries out the reaction (R)-pantothenate + ATP = (R)-4'-phosphopantothenate + ADP + H(+). The protein operates within cofactor biosynthesis; coenzyme A biosynthesis; CoA from (R)-pantothenate: step 1/5. Catalyzes the phosphorylation of pantothenate (Pan), the first step in CoA biosynthesis. The sequence is that of Type III pantothenate kinase from Chlorobaculum tepidum (strain ATCC 49652 / DSM 12025 / NBRC 103806 / TLS) (Chlorobium tepidum).